The chain runs to 692 residues: MGERGELVSDLHPSDDHDADPRLAPLLAWRQQLVDSGAVAPRSFKEAHLRLVLRSGRTDVEQIRAMLPGSVAEHAEEMARILAELTPAAPEPDPPPVPEPQPEPEPGPGKHRSPETDEPPVATTTEIPIPTTGFAPFQFSSQQVALHDITVQRTDAAVELSWPPYEAPEDEAAQDISVVMYRVVSSDDQAPYSPDPAHLVALTEEPKATDERQQVSPVRHYQVWVNVGASEAAARKTQPVLYATAVLVRPVTGFEIREDAGWVIGQWTAPPGVTAVHVFRVPIDEVDRDEAQYRILTAGENLAGFVDTEPVRGQRYRYRARCAVNVDGVVRLSEAAEADVELAAALMPVTDLVVETAADGASCDLSWTPPAGGQVAIYRSQNGPSADAEAIELPQGALEQVGLTPELRVTQDLTEETGSDGRRRARLTGVTWPSEWSRAYFTPVTLMGERAMLGRTLSSVRTGTIRDIELAEYCNKQVLTFDWPDGAASVIVYLAPKGHDPRSGLNGRSFEISLEEYERYGGMHLTGQLPVGGCSLHLAPVAFAGGRRVVGAFSSIEYRGLLRLQYAVRIGRDPNGFPTTATIALRAEQNVPGSPGFVLVNNPQRLPLSVHDGHPVDVAPLDARGQLADHPSKELRWSALTTSGDGELWAANLSGLQGWIRLFVNIGSPAQLRVIALLDPPVETLRLTAATL.

Over residues 1–21 the composition is skewed to basic and acidic residues; it reads MGERGELVSDLHPSDDHDADP. 2 disordered regions span residues 1–23 and 87–134; these read MGERGELVSDLHPSDDHDADPRL and PAAP…TTGF. Over residues 89 to 107 the composition is skewed to pro residues; sequence APEPDPPPVPEPQPEPEPG.

Its subcellular location is the cytoplasm. Its function is as follows. May be involved in assembly of the ESX-1 / type VII specialized secretion system (T7SS), which exports several proteins including EsxA and EsxB. Involved in DNA conjugation in recipient (MKD8) but not donor (mc(2)155) strain. In Mycolicibacterium smegmatis (strain ATCC 700084 / mc(2)155) (Mycobacterium smegmatis), this protein is Putative ESX-1 scaffolding and assembly protein SaeA.